A 97-amino-acid polypeptide reads, in one-letter code: NADH-ubiquinone oxidoreductase chain 4L (97 aa).

3 consecutive transmembrane segments (helical) span residues Met1 to Asn21, Phe25 to Ile45, and Leu60 to Leu80.

The protein belongs to the complex I subunit 4L family.

It is found in the mitochondrion membrane. The catalysed reaction is a ubiquinone + NADH + 5 H(+)(in) = a ubiquinol + NAD(+) + 4 H(+)(out). Its function is as follows. Core subunit of the mitochondrial membrane respiratory chain NADH dehydrogenase (Complex I) that is believed to belong to the minimal assembly required for catalysis. Complex I functions in the transfer of electrons from NADH to the respiratory chain. The immediate electron acceptor for the enzyme is believed to be ubiquinone. This is NADH-ubiquinone oxidoreductase chain 4L (ND4L) from Strongylocentrotus purpuratus (Purple sea urchin).